A 273-amino-acid polypeptide reads, in one-letter code: Large ribosomal subunit protein uL2 (273 aa).

Residues 221-263 (RGTAMNPVDHPHGGGEGRNFGKHPVTPWGVQTKGKKTRHNKRT) form a disordered region. Positions 253–263 (KGKKTRHNKRT) are enriched in basic residues.

The protein belongs to the universal ribosomal protein uL2 family. In terms of assembly, part of the 50S ribosomal subunit. Forms a bridge to the 30S subunit in the 70S ribosome.

In terms of biological role, one of the primary rRNA binding proteins. Required for association of the 30S and 50S subunits to form the 70S ribosome, for tRNA binding and peptide bond formation. It has been suggested to have peptidyltransferase activity; this is somewhat controversial. Makes several contacts with the 16S rRNA in the 70S ribosome. This chain is Large ribosomal subunit protein uL2, found in Actinobacillus succinogenes (strain ATCC 55618 / DSM 22257 / CCUG 43843 / 130Z).